Reading from the N-terminus, the 201-residue chain is Protein GrpE (201 aa).

It belongs to the GrpE family. Homodimer.

The protein resides in the cytoplasm. Participates actively in the response to hyperosmotic and heat shock by preventing the aggregation of stress-denatured proteins, in association with DnaK and GrpE. It is the nucleotide exchange factor for DnaK and may function as a thermosensor. Unfolded proteins bind initially to DnaJ; upon interaction with the DnaJ-bound protein, DnaK hydrolyzes its bound ATP, resulting in the formation of a stable complex. GrpE releases ADP from DnaK; ATP binding to DnaK triggers the release of the substrate protein, thus completing the reaction cycle. Several rounds of ATP-dependent interactions between DnaJ, DnaK and GrpE are required for fully efficient folding. The chain is Protein GrpE from Shewanella frigidimarina (strain NCIMB 400).